A 175-amino-acid chain; its full sequence is Urease accessory protein UreE (175 aa).

The disordered stretch occupies residues 151–175 (GGAYGGSPSHAHRHSHVHSHSHETP). Basic residues predominate over residues 160–169 (HAHRHSHVHS).

Belongs to the UreE family.

The protein resides in the cytoplasm. In terms of biological role, involved in urease metallocenter assembly. Binds nickel. Probably functions as a nickel donor during metallocenter assembly. This is Urease accessory protein UreE from Synechococcus sp. (strain WH7805).